The sequence spans 348 residues: Protein RecA (348 aa).

65-72 (GPESSGKT) is a binding site for ATP.

Belongs to the RecA family.

The protein localises to the cytoplasm. Its function is as follows. Can catalyze the hydrolysis of ATP in the presence of single-stranded DNA, the ATP-dependent uptake of single-stranded DNA by duplex DNA, and the ATP-dependent hybridization of homologous single-stranded DNAs. It interacts with LexA causing its activation and leading to its autocatalytic cleavage. This is Protein RecA from Saccharophagus degradans (strain 2-40 / ATCC 43961 / DSM 17024).